The sequence spans 101 residues: Conantokin-L (101 aa).

An N-terminal signal peptide occupies residues 1–21 (MQLYTYLYLLVPLVTFHLILG). Residues 22-80 (TGTLDHGGALTERRSTDAIALKPEPVLLQKSSARSTDDNGNDRLTQMKRILKKRGNKAR) constitute a propeptide that is removed on maturation. Residues Glu-83, Glu-84, Glu-91, and Glu-95 each carry the 4-carboxyglutamate modification. A divalent metal cation-binding residues include Glu-91 and Glu-95. Asn-99 is modified (asparagine amide).

Belongs to the conotoxin B superfamily. Ca(2+) serves as cofactor. Requires Mg(2+) as cofactor. Expressed by the venom duct.

Its subcellular location is the secreted. Functionally, conantokins inhibit N-methyl-D-aspartate (NMDA) receptors. This toxin is far less potent as an anticonvulsant compound than conantokin-R. It induces sleep-like symptoms in mice. The chain is Conantokin-L from Conus lynceus (Lynceus cone).